We begin with the raw amino-acid sequence, 296 residues long: uncharacterized protein (296 aa).

Residues 1-20 (MKKALGILAILLILVGGYFA) form the signal peptide.

This is an uncharacterized protein from Aquifex aeolicus (strain VF5).